Consider the following 1381-residue polypeptide: Peroxisomal ATPase PEX6 (1381 aa).

Positions 1–10 (MTAPNSTPAS) are enriched in polar residues. Disordered regions lie at residues 1–23 (MTAP…QDKP), 247–315 (VRTS…DNLS), 333–374 (TVTG…DRPR), and 467–499 (YSSR…NPPA). A compositionally biased stretch (basic residues) spans 11-20 (SRKRVRRRRQ). Acidic residues-rich tracts occupy residues 270–284 (AEDD…AEED) and 296–315 (TDAD…DNLS). 3 stretches are compositionally biased toward polar residues: residues 333 to 345 (TVTG…TGTP), 355 to 367 (GPGS…TATT), and 487 to 499 (FFEA…NPPA). 1031–1038 (GPPGTGKT) lines the ATP pocket. Basic and acidic residues-rich tracts occupy residues 1294–1305 (GAKDKDKKKEGA) and 1337–1350 (STKK…KAAD). The interval 1294-1381 (GAKDKDKKKE…GGDEDEGLYD (88 aa)) is disordered. The span at 1372–1381 (GGDEDEGLYD) shows a compositional bias: acidic residues.

This sequence belongs to the AAA ATPase family. As to quaternary structure, interacts with PEX1; forming the PEX1-PEX6 AAA ATPase complex, which is composed of a heterohexamer formed by a trimer of PEX1-PEX6 dimers.

The protein localises to the cytoplasm. It localises to the cytosol. The protein resides in the peroxisome membrane. It carries out the reaction ATP + H2O = ADP + phosphate + H(+). In terms of biological role, component of the PEX1-PEX6 AAA ATPase complex, a protein dislocase complex that mediates the ATP-dependent extraction of the PEX5 receptor from peroxisomal membranes, an essential step for PEX5 recycling. Specifically recognizes PEX5 monoubiquitinated at 'Cys-6', and pulls it out of the peroxisome lumen through the PEX2-PEX10-PEX12 retrotranslocation channel. Extraction by the PEX1-PEX6 AAA ATPase complex is accompanied by unfolding of the TPR repeats and release of bound cargo from PEX5. The protein is Peroxisomal ATPase PEX6 (pex-6) of Neurospora crassa (strain ATCC 24698 / 74-OR23-1A / CBS 708.71 / DSM 1257 / FGSC 987).